The following is a 219-amino-acid chain: Ribose-5-phosphate isomerase A (219 aa).

Residues 28–31 (SGST), 81–84 (DGAD), and 94–97 (KGGG) contribute to the substrate site. E103 functions as the Proton acceptor in the catalytic mechanism. K121 is a binding site for substrate.

This sequence belongs to the ribose 5-phosphate isomerase family. Homodimer.

It carries out the reaction aldehydo-D-ribose 5-phosphate = D-ribulose 5-phosphate. It functions in the pathway carbohydrate degradation; pentose phosphate pathway; D-ribose 5-phosphate from D-ribulose 5-phosphate (non-oxidative stage): step 1/1. Functionally, catalyzes the reversible conversion of ribose-5-phosphate to ribulose 5-phosphate. The polypeptide is Ribose-5-phosphate isomerase A (Haemophilus influenzae (strain PittGG)).